Consider the following 77-residue polypeptide: Small ribosomal subunit protein bS21 (77 aa).

The tract at residues 55 to 77 (RKLARKRAQREGLMSNGRISALR) is disordered.

The protein belongs to the bacterial ribosomal protein bS21 family.

The sequence is that of Small ribosomal subunit protein bS21 from Bartonella quintana (strain Toulouse) (Rochalimaea quintana).